The sequence spans 106 residues: ATP-dependent Clp protease adapter protein ClpS (106 aa).

The span at 1–10 shows a compositional bias: basic and acidic residues; that stretch reads MSQKTVHDQD. The segment at 1-22 is disordered; sequence MSQKTVHDQDNALLLETGNTKV.

It belongs to the ClpS family. Binds to the N-terminal domain of the chaperone ClpA.

Involved in the modulation of the specificity of the ClpAP-mediated ATP-dependent protein degradation. The polypeptide is ATP-dependent Clp protease adapter protein ClpS (Xylella fastidiosa (strain 9a5c)).